An 858-amino-acid polypeptide reads, in one-letter code: Leucine--tRNA ligase (858 aa).

Residues 42–52 (PYPSGNLHMGH) carry the 'HIGH' region motif. Polar residues predominate over residues 584–594 (NPNRSDSSRYI). Positions 584-611 (NPNRSDSSRYIPSNLVDPNDPKDPETGE) are disordered. The 'KMSKS' region motif lies at 619-623 (TMSKS). Lysine 622 provides a ligand contact to ATP.

This sequence belongs to the class-I aminoacyl-tRNA synthetase family.

The protein localises to the cytoplasm. The enzyme catalyses tRNA(Leu) + L-leucine + ATP = L-leucyl-tRNA(Leu) + AMP + diphosphate. The chain is Leucine--tRNA ligase from Cyanothece sp. (strain PCC 7425 / ATCC 29141).